We begin with the raw amino-acid sequence, 847 residues long: MDIRNEFLQFFKNKGHEIYPSMPLVPNDSTLLFTNAGMVQFKDIFTGMVPHPSIPRATSSQLCMRAGGKHNDLENVGYTARHHTLFEMLGNFSFGDYFKEEAILFAWEFVTKNLGFKPKDLYISVHEKDDEAFKLWEKFVPTDKIKKMGDKDNFWQMGDSGPCGPCSEIYIDQGEKHFKGSEDYFGGEGDRFLEIWNLVFMQYERSNDGILSPLPKPSIDTGMGLERVQALLEHKLNNFDSSLFVPLMKEISELTSLDYASEFQPSFRVVADHARAVAFLLAQGVHFNKEGRGYVLRRILRRSLRHGYLMGLKEAFLYRVVGVVCEQFADTHAYLKESKEMVMKECFEEEKRFLETLESGMELFNLSLKHLNDNKIFDGKIAFKLYDTFGFPLDLTNDMLRNHGACVDMQGFESCMQEQVKRSKASWKGKRNNADFSTILNAYAPNVFVGYETTECFSQALGFFDSDFKEMTETNPNQEVWVLLEKTPFYAEGGGAIGDRGALLKDDEEAALVLDTKNFFGLNFSLLKIKKALKKGDQVIAQVSNERLEIAKHHSATHLLQSALREVLGSHVSQAGSLVESKRLRFDFSHSKALNDEELEKVEDLVNAQIFKHLSSQVEHMPLNQAKDKGALALFSEKYAENVRVVSFKEASIELCGGIHVENTGLIGGFRILKESGVSSGVRRIEAVCGKAFYQLAKEENKELKNARILLKNNDLIAGINKLKESVKNSQKASVPMDLPIETINGTSVVVGVVEQGDIKEMIDRLKNKHEKLLAMVFKQENERISLACGVKNAPIKAHVWANEVAQILGGKGGGRDDFASAGGKDIEKLQAALNAAKNTALKALEK.

Zn(2+)-binding residues include His554, His558, Cys656, and His660.

It belongs to the class-II aminoacyl-tRNA synthetase family. The cofactor is Zn(2+).

Its subcellular location is the cytoplasm. It catalyses the reaction tRNA(Ala) + L-alanine + ATP = L-alanyl-tRNA(Ala) + AMP + diphosphate. In terms of biological role, catalyzes the attachment of alanine to tRNA(Ala) in a two-step reaction: alanine is first activated by ATP to form Ala-AMP and then transferred to the acceptor end of tRNA(Ala). Also edits incorrectly charged Ser-tRNA(Ala) and Gly-tRNA(Ala) via its editing domain. This is Alanine--tRNA ligase from Helicobacter acinonychis (strain Sheeba).